We begin with the raw amino-acid sequence, 366 residues long: Class I histocompatibility antigen, Gogo-C*0201 alpha chain (366 aa).

The first 24 residues, 1–24 (MRVMAPRTLILPLSGALALTETWA), serve as a signal peptide directing secretion. The tract at residues 25–114 (GSHSMRYFYT…LRGYYNQSED (90 aa)) is alpha-1. The Extracellular segment spans residues 25 to 308 (GSHSMRYFYT…EPSSQPTIPI (284 aa)). Residue N110 is glycosylated (N-linked (GlcNAc...) asparagine). Positions 115-206 (GSHTLQSMYG…ENGKETLQRA (92 aa)) are alpha-2. 2 cysteine pairs are disulfide-bonded: C125/C188 and C227/C283. An alpha-3 region spans residues 207 to 298 (EPPKTHVTHH…GLPEPLTLRW (92 aa)). An Ig-like C1-type domain is found at 209 to 297 (PKTHVTHHPL…EGLPEPLTLR (89 aa)). The segment at 299–308 (EPSSQPTIPI) is connecting peptide. A helical transmembrane segment spans residues 309-333 (VGIVVGLAVLVVLAVLGAVVTAMMC). Residues 334 to 366 (RRKSSGGKGGSCSQAACSNSAQGSDESLITCKA) lie on the Cytoplasmic side of the membrane.

The protein belongs to the MHC class I family. In terms of assembly, heterodimer of an alpha chain and a beta chain (beta-2-microglobulin).

The protein resides in the membrane. In terms of biological role, involved in the presentation of foreign antigens to the immune system. In Gorilla gorilla gorilla (Western lowland gorilla), this protein is Class I histocompatibility antigen, Gogo-C*0201 alpha chain.